A 79-amino-acid chain; its full sequence is Exodeoxyribonuclease 7 small subunit (79 aa).

It belongs to the XseB family. As to quaternary structure, heterooligomer composed of large and small subunits.

Its subcellular location is the cytoplasm. The enzyme catalyses Exonucleolytic cleavage in either 5'- to 3'- or 3'- to 5'-direction to yield nucleoside 5'-phosphates.. Its function is as follows. Bidirectionally degrades single-stranded DNA into large acid-insoluble oligonucleotides, which are then degraded further into small acid-soluble oligonucleotides. In Lactococcus lactis subsp. lactis (strain IL1403) (Streptococcus lactis), this protein is Exodeoxyribonuclease 7 small subunit.